The primary structure comprises 122 residues: Large ribosomal subunit protein uL18 (122 aa).

The protein belongs to the universal ribosomal protein uL18 family. Part of the 50S ribosomal subunit; part of the 5S rRNA/L5/L18/L25 subcomplex. Contacts the 5S and 23S rRNAs.

In terms of biological role, this is one of the proteins that bind and probably mediate the attachment of the 5S RNA into the large ribosomal subunit, where it forms part of the central protuberance. This Thermotoga neapolitana (strain ATCC 49049 / DSM 4359 / NBRC 107923 / NS-E) protein is Large ribosomal subunit protein uL18.